The primary structure comprises 146 residues: Large ribosomal subunit protein uL16 (146 aa).

Belongs to the universal ribosomal protein uL16 family. In terms of assembly, part of the 50S ribosomal subunit.

Binds 23S rRNA and is also seen to make contacts with the A and possibly P site tRNAs. This is Large ribosomal subunit protein uL16 from Lactobacillus helveticus (strain DPC 4571).